The primary structure comprises 92 residues: Subtilisin inhibitor 1 (92 aa).

The span at 1-12 shows a compositional bias: polar residues; sequence QEQGTNPSQEQN. The interval 1-31 is disordered; that stretch reads QEQGTNPSQEQNVPLPRNYKQALETNTPTKT.

It belongs to the protease inhibitor I13 (potato type I serine protease inhibitor) family.

In terms of biological role, inhibitor of subtilisin. The sequence is that of Subtilisin inhibitor 1 from Phaseolus angularis (Azuki bean).